The following is a 223-amino-acid chain: Ribose-5-phosphate isomerase A (223 aa).

Substrate is bound by residues 32–35 (TGST), 85–88 (DGAD), and 98–101 (KGGG). E107 serves as the catalytic Proton acceptor. K125 lines the substrate pocket.

Belongs to the ribose 5-phosphate isomerase family. Homodimer.

It catalyses the reaction aldehydo-D-ribose 5-phosphate = D-ribulose 5-phosphate. It functions in the pathway carbohydrate degradation; pentose phosphate pathway; D-ribose 5-phosphate from D-ribulose 5-phosphate (non-oxidative stage): step 1/1. In terms of biological role, catalyzes the reversible conversion of ribose-5-phosphate to ribulose 5-phosphate. The protein is Ribose-5-phosphate isomerase A of Stutzerimonas stutzeri (strain A1501) (Pseudomonas stutzeri).